The primary structure comprises 494 residues: Histidine--tRNA ligase (494 aa).

Belongs to the class-II aminoacyl-tRNA synthetase family. As to quaternary structure, homodimer.

The protein resides in the cytoplasm. It catalyses the reaction tRNA(His) + L-histidine + ATP = L-histidyl-tRNA(His) + AMP + diphosphate + H(+). This chain is Histidine--tRNA ligase, found in Cereibacter sphaeroides (strain ATCC 17023 / DSM 158 / JCM 6121 / CCUG 31486 / LMG 2827 / NBRC 12203 / NCIMB 8253 / ATH 2.4.1.) (Rhodobacter sphaeroides).